Here is a 115-residue protein sequence, read N- to C-terminus: Large ribosomal subunit protein bL19 (115 aa).

Belongs to the bacterial ribosomal protein bL19 family.

Functionally, this protein is located at the 30S-50S ribosomal subunit interface and may play a role in the structure and function of the aminoacyl-tRNA binding site. The polypeptide is Large ribosomal subunit protein bL19 (Edwardsiella ictaluri (strain 93-146)).